A 75-amino-acid polypeptide reads, in one-letter code: Small ribosomal subunit protein bS16 (75 aa).

This sequence belongs to the bacterial ribosomal protein bS16 family.

This Nitratiruptor sp. (strain SB155-2) protein is Small ribosomal subunit protein bS16.